We begin with the raw amino-acid sequence, 518 residues long: Retinal dehydrogenase 2 (518 aa).

At tyrosine 168 the chain carries Phosphotyrosine. Residues 184–186 (IPW), 210–213 (KPAE), and 264–266 (STE) each bind NAD(+). The Proton acceptor role is filled by glutamate 286. Residue cysteine 320 is the Nucleophile of the active site. Serine 351 carries the phosphoserine modification. Residues 366-370 (KQYNK) and glutamate 417 contribute to the NAD(+) site.

It belongs to the aldehyde dehydrogenase family. In terms of assembly, homotetramer. In terms of tissue distribution, found in testis and less abundantly in lung, brain, heart, liver and kidney.

Its subcellular location is the cytoplasm. It catalyses the reaction retinal + NAD(+) + H2O = retinoate + NADH + 2 H(+). It carries out the reaction all-trans-retinal + NAD(+) + H2O = all-trans-retinoate + NADH + 2 H(+). The enzyme catalyses all-trans-13,14-dihydroretinal + NAD(+) + H2O = all-trans-13,14-dihydroretinoate + NADH + 2 H(+). It functions in the pathway cofactor metabolism; retinol metabolism. Its function is as follows. Catalyzes the NAD-dependent oxidation of aldehyde substrates, such as all-trans-retinal and all-trans-13,14-dihydroretinal, to their corresponding carboxylic acids, all-trans-retinoate and all-trans-13,14-dihydroretinoate, respectively. Retinoate signaling is critical for the transcriptional control of many genes, for instance it is crucial for initiation of meiosis in both male and female. Recognizes retinal as substrate, both in its free form and when bound to cellular retinol-binding protein. Lacks activity with benzaldehyde, acetaldehyde and octanal. Displays complete lack of activity with citral. This Rattus norvegicus (Rat) protein is Retinal dehydrogenase 2 (Aldh1a2).